Here is a 104-residue protein sequence, read N- to C-terminus: Pyrimidine/purine nucleoside phosphorylase (104 aa).

Belongs to the nucleoside phosphorylase PpnP family.

The enzyme catalyses a purine D-ribonucleoside + phosphate = a purine nucleobase + alpha-D-ribose 1-phosphate. The catalysed reaction is adenosine + phosphate = alpha-D-ribose 1-phosphate + adenine. It catalyses the reaction cytidine + phosphate = cytosine + alpha-D-ribose 1-phosphate. It carries out the reaction guanosine + phosphate = alpha-D-ribose 1-phosphate + guanine. The enzyme catalyses inosine + phosphate = alpha-D-ribose 1-phosphate + hypoxanthine. The catalysed reaction is thymidine + phosphate = 2-deoxy-alpha-D-ribose 1-phosphate + thymine. It catalyses the reaction uridine + phosphate = alpha-D-ribose 1-phosphate + uracil. It carries out the reaction xanthosine + phosphate = alpha-D-ribose 1-phosphate + xanthine. In terms of biological role, catalyzes the phosphorolysis of diverse nucleosides, yielding D-ribose 1-phosphate and the respective free bases. Can use uridine, adenosine, guanosine, cytidine, thymidine, inosine and xanthosine as substrates. Also catalyzes the reverse reactions. This chain is Pyrimidine/purine nucleoside phosphorylase, found in Pelobacter propionicus (strain DSM 2379 / NBRC 103807 / OttBd1).